A 295-amino-acid polypeptide reads, in one-letter code: G1/S-specific cyclin-D1 (295 aa).

In terms of domain architecture, Cyclin N-terminal spans 28 to 152 (LRAMLKAEET…VLVNKLKWNL (125 aa)). The segment at 264–295 (QQNLDPKAAEEEEEEEEVDLACTPTDVRDVNI) is disordered. A Glycyl lysine isopeptide (Lys-Gly) (interchain with G-Cter in ubiquitin) cross-link involves residue K270. The span at 273–282 (EEEEEEEEVD) shows a compositional bias: acidic residues. A Phosphothreonine modification is found at T286.

The protein belongs to the cyclin family. Cyclin D subfamily. Interacts with either CDK4 or CDK6 protein kinase to form a serine/threonine kinase holoenzyme complex. The cyclin subunit imparts substrate specificity to the complex. Component of the ternary complex CCND1/CDK4/CDKN1B required for nuclear translocation and modulation of CDK4-mediated kinase activity. Interacts directly with CDKN1B. Can form similar complexes with either CDKN1A or CDKN2A. Interacts with UHRF2; the interaction ubiquitinates CCND1 and appears to occur independently of phosphorylation. Interacts with USP2. Interacts (via cyclin N-terminal domain) with INSM1 (via N-terminal region); the interaction competes with the binding of CCND1 to CDK4 during cell cycle progression and inhibits CDK4 activity. Interacts with CDK4; the interaction is prevented with the binding of CCND1 to INSM1 during cell cycle progression. Phosphorylation at Thr-286 by MAP kinases is required for ubiquitination and degradation by the DCX(AMBRA1) complex. It also plays an essential role for recognition by the FBXO31 component of SCF (SKP1-cullin-F-box) protein ligase complex following DNA damage. Post-translationally, ubiquitinated at Lys-270 by the DCX(AMBRA1) complex during the transition from G1 to S cell phase, leading to its degradation: ubiquitination is dependent on Thr-286 phosphorylation. The DCX(AMBRA1) complex represents the major regulator of CCND1 stability during the G1/S transition. Also ubiquitinated by the SCF(FBXO4) and Cul7-RING(FBXW8) ubiquitin-protein ligase complexes. Following DNA damage it is ubiquitinated by the SCF(FBXO31) protein ligase complex. SCF(FBXO31) ubiquitination is dependent on Thr-286 phosphorylation. Ubiquitinated also by UHRF2 apparently in a phosphorylation-independent manner. Ubiquitination leads to its degradation and G1 arrest. Deubiquitinated by USP2; leading to its stabilization.

It localises to the nucleus. It is found in the cytoplasm. The protein resides in the nucleus membrane. Its function is as follows. Regulatory component of the cyclin D1-CDK4 (DC) complex that phosphorylates and inhibits members of the retinoblastoma (RB) protein family including RB1 and regulates the cell-cycle during G(1)/S transition. Phosphorylation of RB1 allows dissociation of the transcription factor E2F from the RB/E2F complex and the subsequent transcription of E2F target genes which are responsible for the progression through the G(1) phase. Hypophosphorylates RB1 in early G(1) phase. Cyclin D-CDK4 complexes are major integrators of various mitogenenic and antimitogenic signals. Also a substrate for SMAD3, phosphorylating SMAD3 in a cell-cycle-dependent manner and repressing its transcriptional activity. Component of the ternary complex, cyclin D1/CDK4/CDKN1B, required for nuclear translocation and activity of the cyclin D-CDK4 complex. Exhibits transcriptional corepressor activity with INSM1 on the NEUROD1 and INS promoters in a cell cycle-independent manner. The protein is G1/S-specific cyclin-D1 (CCND1) of Bos taurus (Bovine).